A 504-amino-acid chain; its full sequence is Major capsid protein L1 (504 aa).

2 stretches are compositionally biased toward basic residues: residues 474–486 and 495–504; these read RRRPTIGPRKRPA and SKHKRKRVSK. The segment at 474–504 is disordered; that stretch reads RRRPTIGPRKRPASAKSSSSASKHKRKRVSK.

The protein belongs to the papillomaviridae L1 protein family. As to quaternary structure, self-assembles into homopentamers. The capsid has an icosahedral symmetry and consists of 72 capsomers, with each capsomer being a pentamer of L1. Interacts with the minor capsid protein L2; this interaction is necessary for viral genome encapsidation. Interacts with protein E2; this interaction enhances E2-dependent replication and transcription activation.

The protein localises to the virion. Its subcellular location is the host nucleus. Its function is as follows. Forms an icosahedral capsid with a T=7 symmetry and a 50 nm diameter. The capsid is composed of 72 pentamers linked to each other by disulfide bonds and associated with L2 proteins. Binds to heparan sulfate proteoglycans on cell surface of basal layer keratinocytes to provide initial virion attachment. This binding mediates a conformational change in the virus capsid that facilitates efficient infection. The virion enters the host cell via endocytosis. During virus trafficking, L1 protein dissociates from the viral DNA and the genomic DNA is released to the host nucleus. The virion assembly takes place within the cell nucleus. Encapsulates the genomic DNA together with protein L2. The polypeptide is Major capsid protein L1 (Homo sapiens (Human)).